Reading from the N-terminus, the 385-residue chain is ATP phosphoribosyltransferase regulatory subunit (385 aa).

This sequence belongs to the class-II aminoacyl-tRNA synthetase family. HisZ subfamily. In terms of assembly, heteromultimer composed of HisG and HisZ subunits.

The protein resides in the cytoplasm. It functions in the pathway amino-acid biosynthesis; L-histidine biosynthesis; L-histidine from 5-phospho-alpha-D-ribose 1-diphosphate: step 1/9. In terms of biological role, required for the first step of histidine biosynthesis. May allow the feedback regulation of ATP phosphoribosyltransferase activity by histidine. This Laribacter hongkongensis (strain HLHK9) protein is ATP phosphoribosyltransferase regulatory subunit.